Reading from the N-terminus, the 61-residue chain is MHNYYKIVLIMVAFFAVIITFSNIQVEGAVCNLKRCQLSCRSLGLLGKCIGDKCECVKHGK.

An N-terminal signal peptide occupies residues 1 to 28 (MHNYYKIVLIMVAFFAVIITFSNIQVEG). 3 cysteine pairs are disulfide-bonded: cysteine 31-cysteine 49, cysteine 36-cysteine 54, and cysteine 40-cysteine 56. Residues 34-37 (KRCQ) are [R/K]XCQ motif. Histidine 59 is modified (histidine amide).

The protein belongs to the short scorpion toxin superfamily. Potassium channel inhibitor family. Alpha-KTx 05 subfamily. As to expression, expressed by the venom gland.

The protein localises to the secreted. Its function is as follows. Blocks small conductance calcium-activated potassium channels (KCNN, SK). Has also been shown to weakly inhibit Kv11.1/KCNH2/ERG1, Kv1.2/KCNA2, Kv1.3/KCNA3 and Kv2.1/KCNB1 voltage-gated potassium channels. The chain is Potassium channel toxin alpha-KTx 5.3 from Olivierus martensii (Manchurian scorpion).